The following is a 451-amino-acid chain: Bifunctional protein GlmU (451 aa).

The interval methionine 1–arginine 225 is pyrophosphorylase. Residues leucine 7–glycine 10, lysine 21, glutamine 72, and glycine 77–threonine 78 contribute to the UDP-N-acetyl-alpha-D-glucosamine site. Aspartate 102 is a binding site for Mg(2+). Positions 139, 154, 169, and 223 each coordinate UDP-N-acetyl-alpha-D-glucosamine. Asparagine 223 is a Mg(2+) binding site. Residues leucine 226–alanine 246 form a linker region. An N-acetyltransferase region spans residues glycine 247–serine 451. UDP-N-acetyl-alpha-D-glucosamine-binding residues include arginine 328 and lysine 346. The active-site Proton acceptor is the histidine 358. UDP-N-acetyl-alpha-D-glucosamine contacts are provided by tyrosine 361 and asparagine 372. Acetyl-CoA-binding positions include alanine 375, asparagine 381–tyrosine 382, serine 400, alanine 418, and arginine 435.

The protein in the N-terminal section; belongs to the N-acetylglucosamine-1-phosphate uridyltransferase family. This sequence in the C-terminal section; belongs to the transferase hexapeptide repeat family. Homotrimer. Mg(2+) is required as a cofactor.

Its subcellular location is the cytoplasm. It carries out the reaction alpha-D-glucosamine 1-phosphate + acetyl-CoA = N-acetyl-alpha-D-glucosamine 1-phosphate + CoA + H(+). The catalysed reaction is N-acetyl-alpha-D-glucosamine 1-phosphate + UTP + H(+) = UDP-N-acetyl-alpha-D-glucosamine + diphosphate. The protein operates within nucleotide-sugar biosynthesis; UDP-N-acetyl-alpha-D-glucosamine biosynthesis; N-acetyl-alpha-D-glucosamine 1-phosphate from alpha-D-glucosamine 6-phosphate (route II): step 2/2. It participates in nucleotide-sugar biosynthesis; UDP-N-acetyl-alpha-D-glucosamine biosynthesis; UDP-N-acetyl-alpha-D-glucosamine from N-acetyl-alpha-D-glucosamine 1-phosphate: step 1/1. Its pathway is bacterial outer membrane biogenesis; LPS lipid A biosynthesis. Its function is as follows. Catalyzes the last two sequential reactions in the de novo biosynthetic pathway for UDP-N-acetylglucosamine (UDP-GlcNAc). The C-terminal domain catalyzes the transfer of acetyl group from acetyl coenzyme A to glucosamine-1-phosphate (GlcN-1-P) to produce N-acetylglucosamine-1-phosphate (GlcNAc-1-P), which is converted into UDP-GlcNAc by the transfer of uridine 5-monophosphate (from uridine 5-triphosphate), a reaction catalyzed by the N-terminal domain. The polypeptide is Bifunctional protein GlmU (Trichormus variabilis (strain ATCC 29413 / PCC 7937) (Anabaena variabilis)).